The following is an 86-amino-acid chain: Small ribosomal subunit protein uS17 (86 aa).

It belongs to the universal ribosomal protein uS17 family. In terms of assembly, part of the 30S ribosomal subunit.

One of the primary rRNA binding proteins, it binds specifically to the 5'-end of 16S ribosomal RNA. The chain is Small ribosomal subunit protein uS17 from Roseiflexus sp. (strain RS-1).